We begin with the raw amino-acid sequence, 689 residues long: Zinc finger protein 185 (689 aa).

Disordered regions lie at residues 1 to 253 (MSIS…GRTK) and 298 to 534 (APDV…SCTS). The segment covering 35–52 (LKGDKSWITKQDESEGRT) has biased composition (basic and acidic residues). Serine 66 bears the Phosphoserine mark. Positions 95 to 114 (IDSSSQPQQQFPKANGTPKS) are enriched in polar residues. Serine 153 carries the post-translational modification Phosphoserine. Residues 157–166 (DTEEEEEEEV) are compositionally biased toward acidic residues. Proline 206 carries the post-translational modification Phosphoserine. Basic and acidic residues-rich tracts occupy residues 217 to 232 (KRVE…EKSQ) and 310 to 331 (NKDK…EEAF). Over residues 338-349 (AARSSAQLSDGN) the composition is skewed to polar residues. Low complexity-rich tracts occupy residues 373–382 (SSSATSVSAV) and 434–444 (DPAVPAQQPAD). A Phosphothreonine modification is found at threonine 447. Positions 448–458 (PERQSSPSGSE) are enriched in polar residues. A phosphoserine mark is found at serine 453 and serine 465. Residues 504-524 (PTQQPADPSTPEQQNSPSGSE) show a composition bias toward polar residues. Positions 627 to 689 (GICTYCNREI…HCGKCYEKLF (63 aa)) constitute an LIM zinc-binding domain.

As to expression, expressed in placenta, pancreas and kidney. Also expressed in prostate, testis, ovary and blood.

The protein resides in the cytoplasm. It localises to the cytoskeleton. The protein localises to the cell junction. Its subcellular location is the focal adhesion. Functionally, may be involved in the regulation of cellular proliferation and/or differentiation. This chain is Zinc finger protein 185 (ZNF185), found in Homo sapiens (Human).